Consider the following 205-residue polypeptide: Holliday junction branch migration complex subunit RuvA (205 aa).

Residues 1-64 (MIGKLKGVID…EDMIRLYGFA (64 aa)) are domain I. The tract at residues 65-143 (TQLEREWFRL…AFAGEASGTI (79 aa)) is domain II. Residues 144–152 (GLKQELGAG) are flexible linker. Positions 153-205 (AAPAPVADAVSALSNLGYSRDQAANAVAAALKETGEGADSAKLIRLGLKELSQ) are domain III.

Belongs to the RuvA family. As to quaternary structure, homotetramer. Forms an RuvA(8)-RuvB(12)-Holliday junction (HJ) complex. HJ DNA is sandwiched between 2 RuvA tetramers; dsDNA enters through RuvA and exits via RuvB. An RuvB hexamer assembles on each DNA strand where it exits the tetramer. Each RuvB hexamer is contacted by two RuvA subunits (via domain III) on 2 adjacent RuvB subunits; this complex drives branch migration. In the full resolvosome a probable DNA-RuvA(4)-RuvB(12)-RuvC(2) complex forms which resolves the HJ.

Its subcellular location is the cytoplasm. The RuvA-RuvB-RuvC complex processes Holliday junction (HJ) DNA during genetic recombination and DNA repair, while the RuvA-RuvB complex plays an important role in the rescue of blocked DNA replication forks via replication fork reversal (RFR). RuvA specifically binds to HJ cruciform DNA, conferring on it an open structure. The RuvB hexamer acts as an ATP-dependent pump, pulling dsDNA into and through the RuvAB complex. HJ branch migration allows RuvC to scan DNA until it finds its consensus sequence, where it cleaves and resolves the cruciform DNA. This is Holliday junction branch migration complex subunit RuvA from Brucella abortus (strain S19).